The chain runs to 73 residues: Large ribosomal subunit protein bL31 (73 aa).

This sequence belongs to the bacterial ribosomal protein bL31 family. Type A subfamily. Part of the 50S ribosomal subunit.

In terms of biological role, binds the 23S rRNA. In Sinorhizobium fredii (strain NBRC 101917 / NGR234), this protein is Large ribosomal subunit protein bL31.